A 946-amino-acid chain; its full sequence is Isoleucine--tRNA ligase (946 aa).

The 'HIGH' region signature appears at 58–68 (PYANGSIHIGH). Glutamate 568 is a binding site for L-isoleucyl-5'-AMP. Residues 609–613 (KMSKS) carry the 'KMSKS' region motif. Position 612 (lysine 612) interacts with ATP. Zn(2+)-binding residues include cysteine 908, cysteine 911, cysteine 928, and cysteine 931.

The protein belongs to the class-I aminoacyl-tRNA synthetase family. IleS type 1 subfamily. In terms of assembly, monomer. Requires Zn(2+) as cofactor.

The protein localises to the cytoplasm. The enzyme catalyses tRNA(Ile) + L-isoleucine + ATP = L-isoleucyl-tRNA(Ile) + AMP + diphosphate. Catalyzes the attachment of isoleucine to tRNA(Ile). As IleRS can inadvertently accommodate and process structurally similar amino acids such as valine, to avoid such errors it has two additional distinct tRNA(Ile)-dependent editing activities. One activity is designated as 'pretransfer' editing and involves the hydrolysis of activated Val-AMP. The other activity is designated 'posttransfer' editing and involves deacylation of mischarged Val-tRNA(Ile). The protein is Isoleucine--tRNA ligase of Chromohalobacter salexigens (strain ATCC BAA-138 / DSM 3043 / CIP 106854 / NCIMB 13768 / 1H11).